Here is a 169-residue protein sequence, read N- to C-terminus: uncharacterized protein (169 aa).

Residues 55-77 (SLFIFKAVMILHTCLIVKSIRIF) form a helical membrane-spanning segment.

The protein resides in the membrane. This is an uncharacterized protein from Saccharomyces cerevisiae (strain ATCC 204508 / S288c) (Baker's yeast).